We begin with the raw amino-acid sequence, 1089 residues long: Probable transport protein MmpL8 (1089 aa).

The tract at residues 1-26 (MCDVLMQPVRTPRPSTNLRSKPLRPT) is disordered. 12 helical membrane passes run 44–64 (WVVIAFWVALAGLLAPTVPSL), 222–242 (ITILLLVILLIIYRNPITMVL), 257–277 (LVAIAGLAGLGIANQSIIFMS), 316–336 (IGKVIAASAATVAITFLGMVF), 349–369 (LGISVAVVFFAAVTLLPALMV), 400–420 (KTHLLASALVLVILAGCAGLA), 555–575 (AISTVGGLIDALAYLQDLLGG), 874–894 (IIAMTVCIVLLILIVLLRAIV), 898–918 (YLIGSVIVSYLAALGIGVIVF), 930–950 (IPGLTFVILVAVGADYNMLLI), 973–993 (GGVITAAGLIMAASMYGLVFA), and 996–1016 (GSVVQGAFVLGTGLLLDTFLV). The interval 1056–1078 (RTKRKPLLPKEEEEQSPPDDDDL) is disordered. The span at 1066-1078 (EEEEQSPPDDDDL) shows a compositional bias: acidic residues.

It belongs to the resistance-nodulation-cell division (RND) (TC 2.A.6) family. MmpL subfamily.

Its subcellular location is the cell membrane. This chain is Probable transport protein MmpL8 (mmpL8), found in Mycobacterium bovis (strain ATCC BAA-935 / AF2122/97).